Here is a 121-residue protein sequence, read N- to C-terminus: Small ribosomal subunit protein uS13 (121 aa).

The tract at residues 97–121 (VRGQRTRTNARTRRGARKTVAGKKK) is disordered. Over residues 100-121 (QRTRTNARTRRGARKTVAGKKK) the composition is skewed to basic residues.

Belongs to the universal ribosomal protein uS13 family. As to quaternary structure, part of the 30S ribosomal subunit. Forms a loose heterodimer with protein S19. Forms two bridges to the 50S subunit in the 70S ribosome.

Functionally, located at the top of the head of the 30S subunit, it contacts several helices of the 16S rRNA. In the 70S ribosome it contacts the 23S rRNA (bridge B1a) and protein L5 of the 50S subunit (bridge B1b), connecting the 2 subunits; these bridges are implicated in subunit movement. Contacts the tRNAs in the A and P-sites. This Prochlorococcus marinus (strain MIT 9303) protein is Small ribosomal subunit protein uS13.